Here is a 305-residue protein sequence, read N- to C-terminus: MDETLPGSINIRILIPKLMIIIFGLVGLMGNAIVFWLLGFHLRRNAFSVYILNLALADFLFLLSSIIASTLFLLKVSYLSIIFHLCFNTIMMVVYITGISMLSAISTECCLSVLCPTWYRCHRPVHTSTVMCAVIWVLSLLICILNSYFCAVLHTRYDNDNECLATNIFTASYMIFLLVVLCLSSLALLARLFCGAGQMKLTRFHVTILLTLLVFLLCGLPFVIYCILLFKIKDDFHVLDVNFYLALEVLTAINSCANPIIYFFVGSFRHQLKHQTLKMVLQSALQDTPETAENMVEMSSNKAEP.

Residues 1 to 17 (MDETLPGSINIRILIPK) are Extracellular-facing. The helical transmembrane segment at 18–38 (LMIIIFGLVGLMGNAIVFWLL) threads the bilayer. The Cytoplasmic portion of the chain corresponds to 39-53 (GFHLRRNAFSVYILN). Residues 54–74 (LALADFLFLLSSIIASTLFLL) traverse the membrane as a helical segment. Residues 75 to 78 (KVSY) lie on the Extracellular side of the membrane. A helical membrane pass occupies residues 79–99 (LSIIFHLCFNTIMMVVYITGI). At 100–132 (SMLSAISTECCLSVLCPTWYRCHRPVHTSTVMC) the chain is on the cytoplasmic side. Residues 133-153 (AVIWVLSLLICILNSYFCAVL) form a helical membrane-spanning segment. Residues 154–167 (HTRYDNDNECLATN) lie on the Extracellular side of the membrane. The helical transmembrane segment at 168-188 (IFTASYMIFLLVVLCLSSLAL) threads the bilayer. At 189 to 207 (LARLFCGAGQMKLTRFHVT) the chain is on the cytoplasmic side. Residues 208-228 (ILLTLLVFLLCGLPFVIYCIL) traverse the membrane as a helical segment. At 229-244 (LFKIKDDFHVLDVNFY) the chain is on the extracellular side. The chain crosses the membrane as a helical span at residues 245–265 (LALEVLTAINSCANPIIYFFV). The Cytoplasmic segment spans residues 266–305 (GSFRHQLKHQTLKMVLQSALQDTPETAENMVEMSSNKAEP).

It belongs to the G-protein coupled receptor 1 family. Mas subfamily. As to expression, expressed in a subset of sensory neurons that includes nociceptors. Expressed in the subclass of non-peptidergic sensory neurons that are IB4(+) and VR1(-).

The protein localises to the cell membrane. In terms of biological role, orphan receptor. May be a receptor for RFamide-family neuropeptides such as NPFF and NPAF, which are analgesic in vivo. May regulate nociceptor function and/or development, including the sensation or modulation of pain. In Mus musculus (Mouse), this protein is Mas-related G-protein coupled receptor member A2B.